The sequence spans 426 residues: UDP-N-acetylglucosamine 1-carboxyvinyltransferase (426 aa).

Phosphoenolpyruvate is bound at residue 22 to 23 (KN). A UDP-N-acetyl-alpha-D-glucosamine-binding site is contributed by arginine 93. Cysteine 117 acts as the Proton donor in catalysis. Cysteine 117 is subject to 2-(S-cysteinyl)pyruvic acid O-phosphothioketal. UDP-N-acetyl-alpha-D-glucosamine is bound by residues 162–165 (KVSV), aspartate 307, and isoleucine 329.

It belongs to the EPSP synthase family. MurA subfamily.

The protein localises to the cytoplasm. The enzyme catalyses phosphoenolpyruvate + UDP-N-acetyl-alpha-D-glucosamine = UDP-N-acetyl-3-O-(1-carboxyvinyl)-alpha-D-glucosamine + phosphate. The protein operates within cell wall biogenesis; peptidoglycan biosynthesis. Functionally, cell wall formation. Adds enolpyruvyl to UDP-N-acetylglucosamine. The sequence is that of UDP-N-acetylglucosamine 1-carboxyvinyltransferase from Haemophilus ducreyi (strain 35000HP / ATCC 700724).